Reading from the N-terminus, the 218-residue chain is Grancalcin (218 aa).

EF-hand domains follow at residues 49-84 (SSAG…SGIS), 85-119 (GTYS…KELW), 120-155 (SALN…MGYR), and 156-191 (LSPQ…ALTD). Positions 103, 105, 107, 109, 133, 135, 137, 139, and 144 each coordinate Ca(2+).

In terms of assembly, homodimer. Interacts with SRI and LCP1.

It localises to the cytoplasm. It is found in the cytoplasmic granule membrane. Calcium-binding protein that may play a role in the adhesion of neutrophils to fibronectin. May play a role in the formation of focal adhesions. This chain is Grancalcin (GCA), found in Pongo abelii (Sumatran orangutan).